Consider the following 115-residue polypeptide: Toxin CSTX-9 (115 aa).

Positions Met-1–Ala-20 are cleaved as a signal peptide. Positions Glu-21–Arg-47 are excised as a propeptide. Disulfide bonds link Cys-53/Cys-68, Cys-60/Cys-77, Cys-67/Cys-95, and Cys-79/Cys-93.

It belongs to the neurotoxin 19 (CSTX) family. As to quaternary structure, monomer. Interacts with CSTX-13 (AC P83919) (Kd=370 nM), but does not interact with CSTX-1 (AC P81694). In terms of tissue distribution, expressed by the venom gland.

The protein resides in the secreted. It localises to the target cell membrane. In terms of biological role, synergistic toxin that induces or increases a cytolytic effect when combined with CSTX-1 (AC P81694) or CSTX-13 (AC P83919). Potassium ions and M-ctenitoxin-Cs1a (AC P83619) have also an effect on its activity. When alone, has no insecticidal activity. The polypeptide is Toxin CSTX-9 (Cupiennius salei (American wandering spider)).